Here is a 509-residue protein sequence, read N- to C-terminus: MGVQAGLFGMLGFLGVALGGSPALRWYRTSCHLTKAVPGNPLGYLSFLAKDAQGLALIHARWDAHRRLQSCSWEDEPELTAAYGALCAHETAWGSFIHTPGPELQRALATLQSQWEACRALEESPAGARKKRAAGQSGVPGGGHQREKRGWTMPGTLWCGVGDSAGNSSELGVFQGPDLCCREHDRCPQNISPLQYNYGIRNYRFHTISHCDCDTRFQQCLQNQHDSISDIVGVAFFNVLEIPCFVLEEQEACVAWYWWGGCRMYGTVPLARLQPRTFYNASWSSRATSPTPSSRSPAPPKPRQKQHLRKGPPHQKGSKRPSKANTTALQDPMVSPRLDVAPTGLQGPQGGLKPQGARWVCRSFRRHLDQCEHQIGPREIEFQLLNSAQEPLFHCNCTRRLARFLRLHSPPEVTNMLWELLGTTCFKLAPPLDCVEGKNCSRDPRAIRVSARHLRRLQQRRHQLQDKGTDERQPWPSEPLRGPMSFYNQCLQLTQAARRPDRQQKSWSQ.

A signal peptide spans 1–19; that stretch reads MGVQAGLFGMLGFLGVALG. The disordered stretch occupies residues 123 to 149; sequence ESPAGARKKRAAGQSGVPGGGHQREKR. The tract at residues 150-291 is phospholipase A2-like; it reads GWTMPGTLWC…SWSSRATSPT (142 aa). Ca(2+) contacts are provided by Trp-158, Gly-160, and Gly-162. Disulfide bonds link Cys-159–Cys-181, Cys-180–Cys-220, Cys-187–Cys-213, and Cys-211–Cys-244. A glycan (N-linked (GlcNAc...) asparagine) is linked at Asn-167. The active site involves His-184. Asp-185 is a binding site for Ca(2+). Residue Asp-214 is part of the active site. N-linked (GlcNAc...) asparagine glycosylation is present at Asn-280. The segment at 283–354 is disordered; sequence WSSRATSPTP…LQGPQGGLKP (72 aa). Over residues 284–296 the composition is skewed to low complexity; that stretch reads SSRATSPTPSSRS. Basic residues predominate over residues 302–322; that stretch reads PRQKQHLRKGPPHQKGSKRPS. Residues Asn-325, Asn-396, and Asn-439 are each glycosylated (N-linked (GlcNAc...) asparagine). A disordered region spans residues 458–482; that stretch reads QQRRHQLQDKGTDERQPWPSEPLRG. The segment covering 463-473 has biased composition (basic and acidic residues); the sequence is QLQDKGTDERQ.

This sequence belongs to the phospholipase A2 family. Requires Ca(2+) as cofactor. N-glycosylation does not affect the catalytic activity, but is required for proper secretion. A nonglycosylated form is observed in several cell types. Post-translationally, in several cell types, the N- and C-termini are cleaved off. Expressed in kidney, heart, liver, and skeletal muscle. Also present in placenta and peripheral blood leukocytes. Not detected in colon, thymus, spleen and small intestine. In lung, expressed in bronchial epithelial cells and alveolar macrophages, but scarcely detected in alveolar epithelium, arterial walls and interstitial fibroblasts (at protein level). In joints of osteoarthritis and rheumatoid arthritis, expressed in endothelial cells (at protein level). In normal heart, detected in some vessels. In myocardial tissues with acute infarction, expressed in vascular endothelial cells adjacent to cardiomyocytes and those in lesions with granulation. Expression in cardiomyocytes is scarce (at protein level). In uterus, breast and colon cancers, detected in tumor cells and neighboring microvascular endothelium, but not in normal glandular tissues (at protein level). Expressed in dermal resting mast cells (at protein level) and pulmonary mast cells. Expressed in neuronal fibers (at protein level). Highly expressed in dorsal root ganglia neurons (at protein level). Expressed in Purkinje cells in cerebellum (at protein level). In stomach is preferentially expressed in neuronal fibers and in microvascular endothelium. Sparsely expressed in normal aorta (at protein level). Highly expressed in macrophages and smooth muscle cells in aorta with atheroma.

It is found in the secreted. Its subcellular location is the cell membrane. The protein resides in the cytoplasm. It localises to the cytoskeleton. The protein localises to the microtubule organizing center. It is found in the centrosome. Its subcellular location is the centriole. The protein resides in the recycling endosome. It catalyses the reaction a 1,2-diacyl-sn-glycero-3-phosphocholine + H2O = a 1-acyl-sn-glycero-3-phosphocholine + a fatty acid + H(+). It carries out the reaction 1-hexadecanoyl-2-(9Z,12Z-octadecadienoyl)-sn-glycero-3-phosphocholine + H2O = (9Z,12Z)-octadecadienoate + 1-hexadecanoyl-sn-glycero-3-phosphocholine + H(+). The catalysed reaction is 1-hexadecanoyl-2-(5Z,8Z,11Z,14Z-eicosatetraenoyl)-sn-glycero-3-phosphocholine + H2O = 1-hexadecanoyl-sn-glycero-3-phosphocholine + (5Z,8Z,11Z,14Z)-eicosatetraenoate + H(+). The enzyme catalyses 1-hexadecanoyl-2-(9Z,12Z-octadecadienoyl)-sn-glycero-3-phosphoethanolamine + H2O = 1-hexadecanoyl-sn-glycero-3-phosphoethanolamine + (9Z,12Z)-octadecadienoate + H(+). It catalyses the reaction 1-hexadecanoyl-2-(5Z,8Z,11Z,14Z-eicosatetraenoyl)-sn-glycero-3-phosphoethanolamine + H2O = 1-hexadecanoyl-sn-glycero-3-phosphoethanolamine + (5Z,8Z,11Z,14Z)-eicosatetraenoate + H(+). With respect to regulation, arachidonic acid release is markedly increased by glypican, a glycosylphosphatidylinositol-anchored heparan sulfate proteoglycan. Functionally, secretory calcium-dependent phospholipase A2 that primarily targets extracellular phospholipids. Hydrolyzes the ester bond of the fatty acyl group attached at sn-2 position of phospholipids without apparent head group selectivity. Contributes to phospholipid remodeling of low-density lipoprotein (LDL) and high-density lipoprotein (HDL) particles. Hydrolyzes LDL phospholipids releasing unsaturated fatty acids that regulate macrophage differentiation toward foam cells. May act in an autocrine and paracrine manner. Secreted by immature mast cells, acts on nearby fibroblasts upstream to PTDGS to synthesize prostaglandin D2 (PGD2), which in turn promotes mast cell maturation and degranulation via PTGDR. Secreted by epididymal epithelium, acts on immature sperm cells within the duct, modulating the degree of unsaturation of the fatty acyl components of phosphatidylcholines required for acrosome assembly and sperm cell motility. Facilitates the replacement of fatty acyl chains in phosphatidylcholines in sperm membranes from omega-6 and omega-9 to omega-3 polyunsaturated fatty acids (PUFAs). Coupled to lipoxygenase pathway, may process omega-6 PUFAs to generate oxygenated lipid mediators in the male reproductive tract. At pericentrosomal preciliary compartment, negatively regulates ciliogenesis likely by regulating endocytotic recycling of ciliary membrane protein. Coupled to cyclooxygenase pathway provides arachidonate to generate prostaglandin E2 (PGE2), a potent immunomodulatory lipid in inflammation and tumorigenesis. At colonic epithelial barrier, preferentially hydrolyzes phospholipids having arachidonate and docosahexaenoate at sn-2 position, contributing to the generation of oxygenated metabolites involved in colonic stem cell homeostasis. Releases C16:0 and C18:0 lysophosphatidylcholine subclasses from neuron plasma membranes and promotes neurite outgrowth and neuron survival. This chain is Group 3 secretory phospholipase A2, found in Homo sapiens (Human).